The chain runs to 532 residues: Putative L-lactate permease (532 aa).

14 consecutive transmembrane segments (helical) span residues 23-43 (ALPSYVALPWVATLVMGVHLL), 56-76 (VVSAIIAVQTPITVIFGAILF), 101-121 (VAQLMIIGWAFAFMIEGASGF), 129-149 (APILVGLGFHPLKVAMLALIM), 152-172 (VPVSFGAVGTPTWFGFGALKL), 180-200 (IGSITAFIHSIAALIIPLLAL), 213-233 (IVFIYISVLGCVVPYFLIAQV), 234-254 (NYEFPSLVGGAIGLFISVWAA), 274-294 (AGEVVKALFPTGLLIAFLIVT), 346-366 (LLYVPALIPFVITVLIAIPFF), 387-407 (PFIALIGALVMVNLMLVGGEH), 420-440 (ISGSNWTIFSSFLGAIGSFFS), 462-482 (GISVALVLALQSVGGAMGNMV), and 508-528 (IIPMIIYGIIAALGALFLVPL).

The protein belongs to the lactate permease family.

Its subcellular location is the cell inner membrane. Its function is as follows. May play a role in L-lactate transport. This chain is Putative L-lactate permease, found in Haemophilus influenzae (strain ATCC 51907 / DSM 11121 / KW20 / Rd).